Reading from the N-terminus, the 188-residue chain is Pyridoxal 5'-phosphate synthase subunit PdxT (188 aa).

L-glutamine is bound at residue 47–49 (GES). The active-site Nucleophile is Cys-79. L-glutamine contacts are provided by residues Arg-105 and 134–135 (IR). Residues His-170 and Glu-172 each act as charge relay system in the active site.

It belongs to the glutaminase PdxT/SNO family. In terms of assembly, in the presence of PdxS, forms a dodecamer of heterodimers. Only shows activity in the heterodimer.

The enzyme catalyses aldehydo-D-ribose 5-phosphate + D-glyceraldehyde 3-phosphate + L-glutamine = pyridoxal 5'-phosphate + L-glutamate + phosphate + 3 H2O + H(+). The catalysed reaction is L-glutamine + H2O = L-glutamate + NH4(+). It functions in the pathway cofactor biosynthesis; pyridoxal 5'-phosphate biosynthesis. Its function is as follows. Catalyzes the hydrolysis of glutamine to glutamate and ammonia as part of the biosynthesis of pyridoxal 5'-phosphate. The resulting ammonia molecule is channeled to the active site of PdxS. The chain is Pyridoxal 5'-phosphate synthase subunit PdxT from Listeria monocytogenes serotype 4a (strain HCC23).